A 198-amino-acid polypeptide reads, in one-letter code: Ribonuclease HII (198 aa).

One can recognise an RNase H type-2 domain in the interval 3–194; sequence RRVCGVDEAG…VKRCLALGQQ (192 aa). Residues D9, E10, and D101 each contribute to the a divalent metal cation site.

This sequence belongs to the RNase HII family. The cofactor is Mn(2+). Mg(2+) is required as a cofactor.

The protein localises to the cytoplasm. It carries out the reaction Endonucleolytic cleavage to 5'-phosphomonoester.. Endonuclease that specifically degrades the RNA of RNA-DNA hybrids. The polypeptide is Ribonuclease HII (Laribacter hongkongensis (strain HLHK9)).